The primary structure comprises 267 residues: Carboxy-S-adenosyl-L-methionine synthase (267 aa).

A compositionally biased stretch (polar residues) spans 1–11 (MPNRDTQSQND). The disordered stretch occupies residues 1–25 (MPNRDTQSQNDTPRHSPEAAEPQRD). The span at 12 to 24 (TPRHSPEAAEPQR) shows a compositional bias: basic and acidic residues. Residues Tyr59, 84-86 (GCS), 109-110 (DN), 137-138 (DI), Asn152, and Arg219 contribute to the S-adenosyl-L-methionine site.

It belongs to the class I-like SAM-binding methyltransferase superfamily. Cx-SAM synthase family. Homodimer.

It catalyses the reaction prephenate + S-adenosyl-L-methionine = carboxy-S-adenosyl-L-methionine + 3-phenylpyruvate + H2O. In terms of biological role, catalyzes the conversion of S-adenosyl-L-methionine (SAM) to carboxy-S-adenosyl-L-methionine (Cx-SAM). This chain is Carboxy-S-adenosyl-L-methionine synthase, found in Yersinia pseudotuberculosis serotype O:1b (strain IP 31758).